Here is a 187-residue protein sequence, read N- to C-terminus: Elongation factor P (187 aa).

The protein belongs to the elongation factor P family.

The protein localises to the cytoplasm. Its pathway is protein biosynthesis; polypeptide chain elongation. Functionally, involved in peptide bond synthesis. Stimulates efficient translation and peptide-bond synthesis on native or reconstituted 70S ribosomes in vitro. Probably functions indirectly by altering the affinity of the ribosome for aminoacyl-tRNA, thus increasing their reactivity as acceptors for peptidyl transferase. The polypeptide is Elongation factor P (Paenarthrobacter aurescens (strain TC1)).